The chain runs to 466 residues: Sucrose-6-phosphate hydrolase (466 aa).

Substrate is bound by residues 38 to 41 (LMND), Gln-57, 100 to 101 (YS), 159 to 160 (RD), and Glu-218. The active site involves Asp-41.

Belongs to the glycosyl hydrolase 32 family.

It localises to the cytoplasm. The catalysed reaction is Hydrolysis of terminal non-reducing beta-D-fructofuranoside residues in beta-D-fructofuranosides.. Its pathway is glycan biosynthesis; sucrose metabolism. In terms of biological role, enables the bacterium to metabolize sucrose as a sole carbon source. The polypeptide is Sucrose-6-phosphate hydrolase (scrB) (Salmonella typhimurium).